A 108-amino-acid chain; its full sequence is Histone H4 (108 aa).

The interval 1 to 24 (MTGRGKGGKVLSLGGKGGKGAKRH) is disordered. The DNA-binding element occupies 17-21 (GGKGA).

This sequence belongs to the histone H4 family. The nucleosome is a histone octamer containing two molecules each of H2A, H2B, H3 and H4 assembled in one H3-H4 heterotetramer and two H2A-H2B heterodimers. The octamer wraps approximately 147 bp of DNA.

The protein resides in the nucleus. It is found in the chromosome. Its function is as follows. Core component of nucleosome. Nucleosomes wrap and compact DNA into chromatin, limiting DNA accessibility to the cellular machineries which require DNA as a template. Histones thereby play a central role in transcription regulation, DNA repair, DNA replication and chromosomal stability. DNA accessibility is regulated via a complex set of post-translational modifications of histones, also called histone code, and nucleosome remodeling. This chain is Histone H4, found in Mastigamoeba balamuthi (Phreatamoeba balamuthi).